Reading from the N-terminus, the 136-residue chain is Protein YebF (136 aa).

Positions 1 to 23 (MKKTGLALVLATILLGMMGSVHA) are cleaved as a signal peptide. The region spanning 30-117 (KVPACIGLNQ…KSGTMTYTGL (88 aa)) is the YebF/Cmi domain. A disulfide bridge connects residues C34 and C107. Residues 117-136 (LNAQTRPDPQIGLNSQAGPK) are disordered.

Belongs to the YebF family.

It is found in the secreted. The polypeptide is Protein YebF (Yersinia pseudotuberculosis serotype O:1b (strain IP 31758)).